Reading from the N-terminus, the 48-residue chain is uncharacterized protein (48 aa).

Residues 1-20 (MLLKNWPSRRIQRDKSKRAG) form a disordered region.

This is an uncharacterized protein from Bacillus subtilis (strain 168).